The following is a 762-amino-acid chain: Acyl-homoserine lactone acylase PvdQ (762 aa).

Positions 1–23 are cleaved as a signal peptide; that stretch reads MGMRTVLTGLAGMLLGSMMPVQA. A propeptide spans 194-216 (spacer peptide); it reads ALSGEQAFQVAEQRRQRFRLERG. Residue serine 217 is the Nucleophile of the active site.

It belongs to the peptidase S45 family. As to quaternary structure, heterodimer of an alpha subunit and a beta subunit processed from the same precursor.

The protein localises to the periplasm. The enzyme catalyses an N-acyl-L-homoserine lactone + H2O = L-homoserine lactone + a carboxylate. Its function is as follows. Catalyzes the deacylation of acyl-homoserine lactone (AHL or acyl-HSL), releasing homoserine lactone (HSL) and the corresponding fatty acid. Possesses a specificity for the degradation of long-chain acyl-HSLs (side chains of 11 to 14 carbons in length). Degrades 3-oxo-C12-HSL, one of the two main AHL signal molecules of P.aeruginosa, and thereby functions as a quorum quencher, inhibiting the las quorum-sensing system. Therefore, may enable P.aeruginosa to modulate its own quorum-sensing-dependent pathogenic potential. Also appears to be required for pyoverdin biosynthesis. The chain is Acyl-homoserine lactone acylase PvdQ (pvdQ) from Pseudomonas aeruginosa (strain ATCC 15692 / DSM 22644 / CIP 104116 / JCM 14847 / LMG 12228 / 1C / PRS 101 / PAO1).